Here is a 90-residue protein sequence, read N- to C-terminus: Probable Fe(2+)-trafficking protein (90 aa).

It belongs to the Fe(2+)-trafficking protein family.

Could be a mediator in iron transactions between iron acquisition and iron-requiring processes, such as synthesis and/or repair of Fe-S clusters in biosynthetic enzymes. This chain is Probable Fe(2+)-trafficking protein, found in Aliivibrio salmonicida (strain LFI1238) (Vibrio salmonicida (strain LFI1238)).